A 225-amino-acid chain; its full sequence is Glutathione S-transferase A (225 aa).

In terms of domain architecture, GST N-terminal spans 3 to 85; it reads KDMTLLWGSG…YLESQFKSQG (83 aa). Arginine 18 serves as a coordination point for glutathione. The GST C-terminal domain maps to 92–217; it reads CPAEQAMMYQ…WPPTWLESPQ (126 aa).

It belongs to the GST superfamily. Theta family. Homodimer. Found in all the tissues examined. Highest values found in liver and in intestinal mucosa.

It is found in the cytoplasm. It catalyses the reaction RX + glutathione = an S-substituted glutathione + a halide anion + H(+). In terms of biological role, conjugation of reduced glutathione to a wide number of exogenous and endogenous hydrophobic electrophiles. The sequence is that of Glutathione S-transferase A from Pleuronectes platessa (European plaice).